The chain runs to 226 residues: Enolase-phosphatase E1 (226 aa).

Belongs to the HAD-like hydrolase superfamily. MasA/MtnC family. Monomer. The cofactor is Mg(2+).

The enzyme catalyses 5-methylsulfanyl-2,3-dioxopentyl phosphate + H2O = 1,2-dihydroxy-5-(methylsulfanyl)pent-1-en-3-one + phosphate. The protein operates within amino-acid biosynthesis; L-methionine biosynthesis via salvage pathway; L-methionine from S-methyl-5-thio-alpha-D-ribose 1-phosphate: step 3/6. It functions in the pathway amino-acid biosynthesis; L-methionine biosynthesis via salvage pathway; L-methionine from S-methyl-5-thio-alpha-D-ribose 1-phosphate: step 4/6. Bifunctional enzyme that catalyzes the enolization of 2,3-diketo-5-methylthiopentyl-1-phosphate (DK-MTP-1-P) into the intermediate 2-hydroxy-3-keto-5-methylthiopentenyl-1-phosphate (HK-MTPenyl-1-P), which is then dephosphorylated to form the acireductone 1,2-dihydroxy-3-keto-5-methylthiopentene (DHK-MTPene). The polypeptide is Enolase-phosphatase E1 (Shewanella amazonensis (strain ATCC BAA-1098 / SB2B)).